Reading from the N-terminus, the 342-residue chain is Phosphate acyltransferase (342 aa).

The protein belongs to the PlsX family. As to quaternary structure, homodimer. Probably interacts with PlsY.

The protein localises to the cytoplasm. It catalyses the reaction a fatty acyl-[ACP] + phosphate = an acyl phosphate + holo-[ACP]. The protein operates within lipid metabolism; phospholipid metabolism. Catalyzes the reversible formation of acyl-phosphate (acyl-PO(4)) from acyl-[acyl-carrier-protein] (acyl-ACP). This enzyme utilizes acyl-ACP as fatty acyl donor, but not acyl-CoA. This is Phosphate acyltransferase from Shewanella amazonensis (strain ATCC BAA-1098 / SB2B).